Consider the following 415-residue polypeptide: Zona pellucida-like domain-containing protein 1 (415 aa).

A signal peptide spans 1–19 (MEPIWLLLLLAIFTVSVSA). Residues 20–372 (QFNGYNCDAN…QQFQINSVTS (353 aa)) are Extracellular-facing. The ZP domain maps to 43–320 (YCGVQTITMK…PTCHNRDRRD (278 aa)). 4 disulfide bridges follow: Cys44/Cys155, Cys79/Cys104, Cys235/Cys296, and Cys255/Cys313. The chain crosses the membrane as a helical span at residues 373–393 (ALISGVVILGATSLSFFIIAL). Residues 394–415 (TLLNRKKQNSLVLCGIRNPVFN) lie on the Cytoplasmic side of the membrane.

In terms of processing, proteolytically cleaved before the transmembrane segment to yield the secreted form found in the extracellular matrix of the cupula.

The protein localises to the cytoplasmic vesicle membrane. It is found in the secreted. The protein resides in the extracellular space. It localises to the extracellular matrix. Functionally, glycoprotein which is a component of the gelatinous extracellular matrix in the cupulae of the vestibular organ. This chain is Zona pellucida-like domain-containing protein 1 (zpld1), found in Xenopus laevis (African clawed frog).